A 688-amino-acid chain; its full sequence is Complement C1s subcomponent (688 aa).

The first 15 residues, 1 to 15 (MWCIVLFSLLAWVYA), serve as a signal peptide directing secretion. Residues 16 to 130 (EPTMYGEILS…TGFAAYYVAT (115 aa)) form the CUB 1 domain. Glu-60, Asp-68, Asp-113, Asp-131, Ile-132, and Glu-134 together coordinate Ca(2+). A disulfide bridge connects residues Cys-65 and Cys-83. Residues 131-172 (DINECTDFVDVPCSHFCNNFIGGYFCSCPPEYFLHDDMKNCG) enclose the EGF-like; calcium-binding domain. Disulfide bonds link Cys-135-Cys-147, Cys-143-Cys-156, and Cys-158-Cys-171. Ca(2+)-binding residues include Asn-149, Phe-150, and Gly-153. Asn-149 is subject to (3R)-3-hydroxyasparagine. N-linked (GlcNAc...) asparagine glycosylation occurs at Asn-174. A disulfide bond links Cys-175 and Cys-202. One can recognise a CUB 2 domain in the interval 175–290 (CSGDVFTALI…KGWKLRYHGD (116 aa)). Ca(2+) is bound by residues Glu-226, Asp-236, Asp-275, Gly-278, and Gln-279. Residues Cys-234 and Cys-251 are joined by a disulfide bond. Sushi domains follow at residues 292-356 (MPCP…KCQP) and 357-423 (VDCG…KCVP). 7 cysteine pairs are disulfide-bonded: Cys-294–Cys-341, Cys-321–Cys-354, Cys-359–Cys-403, Cys-386–Cys-421, Cys-425–Cys-549, Cys-595–Cys-618, and Cys-628–Cys-659. Residue Asn-406 is glycosylated (N-linked (GlcNAc...) asparagine). Positions 438–680 (IIGGSDADIK…YVDWIMKTMQ (243 aa)) constitute a Peptidase S1 domain. Active-site charge relay system residues include His-475 and Asp-529. Ser-632 (charge relay system) is an active-site residue.

This sequence belongs to the peptidase S1 family. In terms of assembly, core component of the complement C1 complex, a calcium-dependent complex composed of 1 molecule of the C1Q subcomplex, 2 molecules of C1R and 2 molecules of C1S. The C1Q subcomplex is composed 18 subunits: 3 chains of C1QA, C1QB, and C1QC trimerize to form 6 collagen-like triple helices connected to six globular ligand-recognition modules. In terms of processing, cleaved and activated by C1R to generate Complement C1s subcomponent heavy and light chains. The iron and 2-oxoglutarate dependent 3-hydroxylation of aspartate and asparagine is (R) stereospecific within EGF domains.

It localises to the secreted. The protein localises to the cell surface. It carries out the reaction Cleavage of Arg-|-Ala bond in complement component C4 to form C4a and C4b, and Lys(or Arg)-|-Lys bond in complement component C2 to form C2a and C2b: the 'classical' pathway C3 convertase.. With respect to regulation, cleaved and activated by C1R. Immunoglobulin-binding promotes autoactivation of C1R, which results in the cleavage of the Arg-Ile bond in the catalytic domain. Inhibited by C1 inhibitor (SERPING1). In terms of biological role, component of the complement C1 complex, a multiprotein complex that initiates the classical pathway of the complement system, a cascade of proteins that leads to phagocytosis and breakdown of pathogens and signaling that strengthens the adaptive immune system. C1S is activated following association of the C1 complex with immunoglobulins (IgG or IgM) complexed with antigens to form antigen-antibody complexes on the surface of pathogens. C1S is cleaved and activated by C1R to generate C1s subcomponent heavy and light chains. C1s subcomponent light chain then cleaves and activates C2 and C4, the next components of the classical complement pathway. Serine protease component of the complement C1 complex, which catalyzes cleavage and activation of C2 and C4, the next components of the classical complement pathway. Also able to cleave C1 inhibitor (SERPING1) in vitro; additional evidence is however required to confirm this result in vivo. Also cleaves IGFBP5 and thereby inhibits the trophic effects of IGF1. The sequence is that of Complement C1s subcomponent from Homo sapiens (Human).